Consider the following 806-residue polypeptide: ATP-dependent zinc metalloprotease FTSH 9, chloroplastic (806 aa).

The transit peptide at Met-1 to Pro-62 directs the protein to the chloroplast. Residues Ser-84 to Gly-116 are disordered. 2 helical membrane-spanning segments follow: residues Ile-133 to Val-153 and Gly-271 to Leu-291. Position 369–376 (Gly-369–Thr-376) interacts with ATP. His-594 is a binding site for Zn(2+). The active site involves Glu-595. Positions 598 and 677 each coordinate Zn(2+).

In the N-terminal section; belongs to the AAA ATPase family. The protein in the C-terminal section; belongs to the peptidase M41 family. Zn(2+) is required as a cofactor.

The protein localises to the plastid. It is found in the chloroplast thylakoid membrane. Its function is as follows. Probable ATP-dependent zinc metallopeptidase. This chain is ATP-dependent zinc metalloprotease FTSH 9, chloroplastic (FTSH9), found in Arabidopsis thaliana (Mouse-ear cress).